The chain runs to 1330 residues: G2/mitotic-specific cyclin-B3 (1330 aa).

Positions 1-50 are disordered; sequence MPLPLPSRSSKPETKKSRSSKIVPSGNNGQSEKRGENYQEKISSSSPRRL. The span at 20–30 shows a compositional bias: polar residues; it reads SKIVPSGNNGQ. The D-box motif lies at 54–62; sequence RSAFEDLTN. The tract at residues 1002–1059 is disordered; sequence VETSSRVPSTPPESRAGMSSVGKLSTTSKSSVCESSSNKPSSSWGESSQKEMTPLEDI. Residues 1026–1048 show a composition bias toward low complexity; sequence STTSKSSVCESSSNKPSSSWGES.

It belongs to the cyclin family. Cyclin AB subfamily. Interacts with CDK2 kinase. Post-translationally, ubiquitinated. Ubiquitination leads to its degradation during anaphase entry, after degradation of CCNB1.

It is found in the nucleus. Its function is as follows. Cyclins are positive regulatory subunits of the cyclin-dependent kinases (CDKs), and thereby play an essential role in the control of the cell cycle, notably via their destruction during cell division. Its tissue specificity suggest that it may be required during early meiotic prophase I. The chain is G2/mitotic-specific cyclin-B3 (CCNB3) from Canis lupus familiaris (Dog).